Reading from the N-terminus, the 223-residue chain is Flagellar L-ring protein (223 aa).

A signal peptide spans Met1–Ala18. Residue Cys19 is the site of N-palmitoyl cysteine attachment. The S-diacylglycerol cysteine moiety is linked to residue Cys19.

It belongs to the FlgH family. As to quaternary structure, the basal body constitutes a major portion of the flagellar organelle and consists of four rings (L,P,S, and M) mounted on a central rod.

The protein resides in the cell outer membrane. Its subcellular location is the bacterial flagellum basal body. In terms of biological role, assembles around the rod to form the L-ring and probably protects the motor/basal body from shearing forces during rotation. This chain is Flagellar L-ring protein, found in Herminiimonas arsenicoxydans.